A 430-amino-acid chain; its full sequence is Serine--tRNA ligase (430 aa).

231 to 233 (TSE) contributes to the L-serine binding site. 262-264 (RSE) is a binding site for ATP. Glutamate 285 is a binding site for L-serine. 349–352 (EISS) lines the ATP pocket. Position 385 (serine 385) interacts with L-serine.

The protein belongs to the class-II aminoacyl-tRNA synthetase family. Type-1 seryl-tRNA synthetase subfamily. As to quaternary structure, homodimer. The tRNA molecule binds across the dimer.

It localises to the cytoplasm. It catalyses the reaction tRNA(Ser) + L-serine + ATP = L-seryl-tRNA(Ser) + AMP + diphosphate + H(+). The enzyme catalyses tRNA(Sec) + L-serine + ATP = L-seryl-tRNA(Sec) + AMP + diphosphate + H(+). Its pathway is aminoacyl-tRNA biosynthesis; selenocysteinyl-tRNA(Sec) biosynthesis; L-seryl-tRNA(Sec) from L-serine and tRNA(Sec): step 1/1. Its function is as follows. Catalyzes the attachment of serine to tRNA(Ser). Is also able to aminoacylate tRNA(Sec) with serine, to form the misacylated tRNA L-seryl-tRNA(Sec), which will be further converted into selenocysteinyl-tRNA(Sec). This chain is Serine--tRNA ligase, found in Ruegeria pomeroyi (strain ATCC 700808 / DSM 15171 / DSS-3) (Silicibacter pomeroyi).